The primary structure comprises 217 residues: uncharacterized protein (217 aa).

A run of 7 helical transmembrane segments spans residues 4-23, 44-66, 76-98, 111-128, 132-154, 166-188, and 198-215; these read IYGI…GKET, NVVI…LTWV, TVET…SIII, FLYL…IHAI, MAMV…PLAL, AGTA…IVLF, and LLLS…ALQL.

It localises to the cell membrane. This is an uncharacterized protein from Archaeoglobus fulgidus (strain ATCC 49558 / DSM 4304 / JCM 9628 / NBRC 100126 / VC-16).